Consider the following 274-residue polypeptide: Large ribosomal subunit protein uL2 (274 aa).

The segment at 223 to 256 (VAMNPVDHPHGGGEGRTSGGRHPVTPWGIPTKGY) is disordered.

Belongs to the universal ribosomal protein uL2 family. As to quaternary structure, part of the 50S ribosomal subunit. Forms a bridge to the 30S subunit in the 70S ribosome.

One of the primary rRNA binding proteins. Required for association of the 30S and 50S subunits to form the 70S ribosome, for tRNA binding and peptide bond formation. It has been suggested to have peptidyltransferase activity; this is somewhat controversial. Makes several contacts with the 16S rRNA in the 70S ribosome. This chain is Large ribosomal subunit protein uL2, found in Trichlorobacter lovleyi (strain ATCC BAA-1151 / DSM 17278 / SZ) (Geobacter lovleyi).